A 204-amino-acid polypeptide reads, in one-letter code: Urease accessory protein UreG 1 (204 aa).

14 to 21 (GPVGSGKT) provides a ligand contact to GTP.

This sequence belongs to the SIMIBI class G3E GTPase family. UreG subfamily. As to quaternary structure, homodimer. UreD, UreF and UreG form a complex that acts as a GTP-hydrolysis-dependent molecular chaperone, activating the urease apoprotein by helping to assemble the nickel containing metallocenter of UreC. The UreE protein probably delivers the nickel.

The protein localises to the cytoplasm. Its function is as follows. Facilitates the functional incorporation of the urease nickel metallocenter. This process requires GTP hydrolysis, probably effectuated by UreG. The polypeptide is Urease accessory protein UreG 1 (Methylorubrum extorquens (strain PA1) (Methylobacterium extorquens)).